The sequence spans 528 residues: Na(+)/H(+) antiporter NhaB (528 aa).

A run of 11 helical transmembrane segments spans residues 29-49 (LIIN…LLVI), 52-72 (IFTL…LLAI), 95-115 (VLLL…LLLF), 139-159 (AFLS…AVAV), 203-223 (LLMH…VGEP), 248-268 (VPVF…KIFG), 304-324 (AFIG…VGLI), 349-369 (EEAL…AVII), 390-410 (LVIF…VFVG), 448-468 (ATPN…APLI), and 476-496 (VWMA…AIEL).

The protein belongs to the NhaB Na(+)/H(+) (TC 2.A.34) antiporter family.

The protein localises to the cell inner membrane. The enzyme catalyses 2 Na(+)(in) + 3 H(+)(out) = 2 Na(+)(out) + 3 H(+)(in). Functionally, na(+)/H(+) antiporter that extrudes sodium in exchange for external protons. In Shewanella woodyi (strain ATCC 51908 / MS32), this protein is Na(+)/H(+) antiporter NhaB.